Here is a 579-residue protein sequence, read N- to C-terminus: MAQVVATRSIQGSMLSPNGGSVSTRSEKLLKPASFAVKVLGNEAKRSGRVSVRSRRVVDTTVRSARVETEVIPVSPEDVPNREEQLERLLEMQQFGDTSVGMWSKPTVRRKTKIVCTVGPSTNTREMIWKLAEAGMNVARMNMSHGDHASHKKVIDLVKEYNAQTKDNTIAIMLDTKGPEVRSGDLPQPIMLDPGQEFTFTIERGVSTPSCVSVNYDDFVNDVEAGDMLLVDGGMMSFMVKSKTKDSVKCEVVDGGELKSRRHLNVRGKSATLPSITEKDWEDIKFGVENKVDFYAVSFVKDAQVVHELKKYLQNSGADIHVIVKIESADSIPNLHSIITASDGAMVARGDLGAELPIEEVPILQEEIINLCRSMGKAVIVATNMLESMIVHPTPTRAEVSDIAIAVREGADAVMLSGETAHGKFPLKAAGVMHTVALRTEATITSGEMPPNLGQAFKNHMSEMFAYHATMMSNTLGTSTVVFTRTGFMAILLSHYRPSGTIYAFTNEKKIQQRLALYQGVCPIYMEFTDDAEETFANALATLLKQGMVKKGEEIAIVQSGTQPIWRSQSTHNIQVRKV.

The transit peptide at 1–63 (MAQVVATRSI…SRRVVDTTVR (63 aa)) directs the protein to the chloroplast. Polar residues predominate over residues 6 to 24 (ATRSIQGSMLSPNGGSVST). A disordered region spans residues 6–26 (ATRSIQGSMLSPNGGSVSTRS). Arginine 140 lines the substrate pocket. K(+)-binding residues include asparagine 142, serine 144, aspartate 175, and threonine 176. 142–145 (NMSH) contributes to the ATP binding site. Arginine 182 is an ATP binding site. Residue lysine 325 coordinates substrate. Position 327 (glutamate 327) interacts with Mg(2+). Positions 350, 351, and 383 each coordinate substrate. Aspartate 351 contacts Mg(2+).

The protein belongs to the pyruvate kinase family. Oligomer of alpha and beta subunits. The cofactor is Mg(2+). K(+) is required as a cofactor. Mostly expressed in seeds, and, to a lower extent, in roots, leaves (veins and trichomes), inflorescences, siliques, pollen (grains and tubes) and flowers (sepals and petals).

It localises to the plastid. Its subcellular location is the chloroplast stroma. It is found in the mitochondrion. It catalyses the reaction pyruvate + ATP = phosphoenolpyruvate + ADP + H(+). Its pathway is carbohydrate degradation; glycolysis; pyruvate from D-glyceraldehyde 3-phosphate: step 5/5. In terms of biological role, required for plastidial pyruvate kinase activity. Involved in seed oil accumulation, embryo development and seed storage compounds mobilization upon germination. This chain is Plastidial pyruvate kinase 2 (PKP2), found in Arabidopsis thaliana (Mouse-ear cress).